The chain runs to 241 residues: Small ribosomal subunit protein uS3 (241 aa).

Positions 39 to 107 (IREILHKELK…DVVINIVEIR (69 aa)) constitute a KH type-2 domain. Residues 217–241 (KRMAEGETGGGGDRGGRQRRDNAAV) form a disordered region. The span at 230-241 (RGGRQRRDNAAV) shows a compositional bias: basic and acidic residues.

It belongs to the universal ribosomal protein uS3 family. Part of the 30S ribosomal subunit. Forms a tight complex with proteins S10 and S14.

In terms of biological role, binds the lower part of the 30S subunit head. Binds mRNA in the 70S ribosome, positioning it for translation. This chain is Small ribosomal subunit protein uS3, found in Bradyrhizobium diazoefficiens (strain JCM 10833 / BCRC 13528 / IAM 13628 / NBRC 14792 / USDA 110).